We begin with the raw amino-acid sequence, 480 residues long: Phenylalanine--tRNA ligase alpha subunit (480 aa).

L-phenylalanine is bound by residues Thr-324 and Phe-407. Glu-409 provides a ligand contact to Mg(2+). L-phenylalanine is bound at residue Phe-432.

This sequence belongs to the class-II aminoacyl-tRNA synthetase family. Phe-tRNA synthetase alpha subunit type 2 subfamily. Tetramer of two alpha and two beta subunits. Mg(2+) serves as cofactor.

It is found in the cytoplasm. It catalyses the reaction tRNA(Phe) + L-phenylalanine + ATP = L-phenylalanyl-tRNA(Phe) + AMP + diphosphate + H(+). This chain is Phenylalanine--tRNA ligase alpha subunit, found in Methanocaldococcus jannaschii (strain ATCC 43067 / DSM 2661 / JAL-1 / JCM 10045 / NBRC 100440) (Methanococcus jannaschii).